We begin with the raw amino-acid sequence, 356 residues long: tRNA N6-adenosine threonylcarbamoyltransferase (356 aa).

Residues His115 and His119 each contribute to the Fe cation site. Residues 138 to 142, Asp171, Gly184, and Asn283 contribute to the substrate site; that span reads LVSGG. Asp311 is a Fe cation binding site.

The protein belongs to the KAE1 / TsaD family. It depends on Fe(2+) as a cofactor.

It is found in the cytoplasm. It carries out the reaction L-threonylcarbamoyladenylate + adenosine(37) in tRNA = N(6)-L-threonylcarbamoyladenosine(37) in tRNA + AMP + H(+). Its function is as follows. Required for the formation of a threonylcarbamoyl group on adenosine at position 37 (t(6)A37) in tRNAs that read codons beginning with adenine. Is involved in the transfer of the threonylcarbamoyl moiety of threonylcarbamoyl-AMP (TC-AMP) to the N6 group of A37, together with TsaE and TsaB. TsaD likely plays a direct catalytic role in this reaction. This Prochlorococcus marinus (strain MIT 9313) protein is tRNA N6-adenosine threonylcarbamoyltransferase.